The sequence spans 444 residues: ATP-dependent protease ATPase subunit HslU (444 aa).

Residues isoleucine 20 and 62–67 (GVGKTE) each bind ATP. A disordered region spans residues 137-162 (LVPPSRGTSGEPERGEDSNARQTFRK). ATP is bound by residues aspartate 257, glutamate 322, and arginine 394.

The protein belongs to the ClpX chaperone family. HslU subfamily. In terms of assembly, a double ring-shaped homohexamer of HslV is capped on each side by a ring-shaped HslU homohexamer. The assembly of the HslU/HslV complex is dependent on binding of ATP.

The protein localises to the cytoplasm. ATPase subunit of a proteasome-like degradation complex; this subunit has chaperone activity. The binding of ATP and its subsequent hydrolysis by HslU are essential for unfolding of protein substrates subsequently hydrolyzed by HslV. HslU recognizes the N-terminal part of its protein substrates and unfolds these before they are guided to HslV for hydrolysis. The chain is ATP-dependent protease ATPase subunit HslU from Bordetella petrii (strain ATCC BAA-461 / DSM 12804 / CCUG 43448).